The following is a 182-amino-acid chain: ATP synthase subunit delta (182 aa).

This sequence belongs to the ATPase delta chain family. F-type ATPases have 2 components, F(1) - the catalytic core - and F(0) - the membrane proton channel. F(1) has five subunits: alpha(3), beta(3), gamma(1), delta(1), epsilon(1). F(0) has three main subunits: a(1), b(2) and c(10-14). The alpha and beta chains form an alternating ring which encloses part of the gamma chain. F(1) is attached to F(0) by a central stalk formed by the gamma and epsilon chains, while a peripheral stalk is formed by the delta and b chains.

The protein localises to the cell membrane. Its function is as follows. F(1)F(0) ATP synthase produces ATP from ADP in the presence of a proton or sodium gradient. F-type ATPases consist of two structural domains, F(1) containing the extramembraneous catalytic core and F(0) containing the membrane proton channel, linked together by a central stalk and a peripheral stalk. During catalysis, ATP synthesis in the catalytic domain of F(1) is coupled via a rotary mechanism of the central stalk subunits to proton translocation. In terms of biological role, this protein is part of the stalk that links CF(0) to CF(1). It either transmits conformational changes from CF(0) to CF(1) or is implicated in proton conduction. This Lactobacillus johnsonii (strain CNCM I-12250 / La1 / NCC 533) protein is ATP synthase subunit delta.